The sequence spans 280 residues: Trypsin zeta (280 aa).

The first 22 residues, 1-22 (MSSSWIVGLLAFLVSLVALTQG), serve as a signal peptide directing secretion. Residues 23-38 (LPLLEDLDEKSVPDGR) constitute a propeptide, activation peptide. Residues 39-278 (IVGGYATDIA…LRPWIDAVLA (240 aa)) form the Peptidase S1 domain. A disulfide bridge links cysteine 72 with cysteine 88. Active-site charge relay system residues include histidine 87 and aspartate 134. Disulfide bonds link cysteine 198-cysteine 218 and cysteine 230-cysteine 254. Serine 234 functions as the Charge relay system in the catalytic mechanism.

Belongs to the peptidase S1 family.

Its subcellular location is the secreted. It localises to the extracellular space. The catalysed reaction is Preferential cleavage: Arg-|-Xaa, Lys-|-Xaa.. In Drosophila melanogaster (Fruit fly), this protein is Trypsin zeta (zetaTry).